The sequence spans 341 residues: HTH-type transcriptional repressor PurR (341 aa).

The HTH lacI-type domain maps to 2–56; sequence ATIKDVAKRANVSTTTVSHVINKTRFVAEETRNAVWAAIKELHYSPSAVARSLKV. Residues 4–23 constitute a DNA-binding region (H-T-H motif); the sequence is IKDVAKRANVSTTTVSHVIN. A DNA-binding region spans residues 48 to 56; the sequence is SAVARSLKV. Tyrosine 73, arginine 190, threonine 192, phenylalanine 221, and aspartate 275 together coordinate hypoxanthine.

As to quaternary structure, homodimer.

The protein operates within purine metabolism; purine nucleotide biosynthesis [regulation]. Is the main repressor of the genes involved in the de novo synthesis of purine nucleotides, regulating purB, purC, purEK, purF, purHD, purL, purMN and guaBA expression. In addition, it participates in the regulation or coregulation of genes involved in de novo pyrimidine nucleotide biosynthesis, salvage and uptake (pyrC, pyrD, carAB and codBA), and of several genes encoding enzymes necessary for nucleotide and polyamine biosynthesis (prsA, glyA, gcvTHP, speA, glnB). Binds to a 16-bp palindromic sequence located within the promoter region of pur regulon genes. The consensus binding sequence is 5'-ACGCAAACGTTTTCNT-3'. PurR is allosterically activated to bind its cognate DNA by binding the purine corepressors, hypoxanthine or guanine, thereby effecting transcription repression. The protein is HTH-type transcriptional repressor PurR (purR) of Escherichia coli (strain K12).